The primary structure comprises 443 residues: Putative metabolite transport protein YaaU (443 aa).

Residues 1-18 (MQPSRNFDDLKFSSIHRR) are Cytoplasmic-facing. The helical transmembrane segment at 19 to 39 (ILLWGSGGPFLDGYVLVMIGV) threads the bilayer. Residues 40-53 (ALEQLTPALKLDAD) lie on the Periplasmic side of the membrane. A helical transmembrane segment spans residues 54–74 (WIGLLGAGTLAGLFVGTSLFG). The Cytoplasmic portion of the chain corresponds to 75–84 (YISDKVGRRK). Residues 85–105 (MFLIDIIAIGVISVATMFVSS) traverse the membrane as a helical segment. At 106-113 (PVELLVMR) the chain is on the periplasmic side. A helical transmembrane segment spans residues 114–134 (VLIGIVIGADYPIATSMITEF). The Cytoplasmic segment spans residues 135–145 (SSTRQRAFSIS). A helical transmembrane segment spans residues 146–166 (FIAAMWYVGATCADLVGYWLY). The Periplasmic segment spans residues 167-173 (DVEGGWR). The chain crosses the membrane as a helical span at residues 174–194 (WMLGSAAIPCLLILIGRFELP). Residues 195–241 (ESPRWLLRKGRVKECEEMMIKLFGEPVAFDEEQPQQTRFRDLFNRRH) are Cytoplasmic-facing. Residues 242 to 262 (FPFVLFVAAIWTCQVIPMFAI) form a helical membrane-spanning segment. The Periplasmic segment spans residues 263-282 (YTFGPQIVGLLGLGVGKNAA). Residues 283 to 303 (LGNVVISLFFMLGCIPPMLWL) form a helical membrane-spanning segment. The Cytoplasmic segment spans residues 304–309 (NTAGRR). Residues 310-329 (PLLIGSFAMMTLALAVLGLI) form a helical membrane-spanning segment. The Periplasmic portion of the chain corresponds to 330–334 (PDMGI). A helical transmembrane segment spans residues 335 to 357 (WLVVMAFAVYAFFSGGPGNLQWL). At 358 to 373 (YPNELFPTDIRASAVG) the chain is on the cytoplasmic side. The helical transmembrane segment at 374–394 (VIMSLSRIGTIVSTWALPIFI) threads the bilayer. At 395-401 (NNYGISN) the chain is on the periplasmic side. A helical transmembrane segment spans residues 402 to 422 (TMLMGAGISLFGLLISVAFAP). Residues 423–443 (ETRGMSLAQTSNMTIRGQRMG) are Cytoplasmic-facing.

The protein belongs to the major facilitator superfamily. Sugar transporter (TC 2.A.1.1) family.

The protein localises to the cell inner membrane. The sequence is that of Putative metabolite transport protein YaaU (yaaU) from Escherichia coli (strain K12).